Here is a 35-residue protein sequence, read N- to C-terminus: MEVNILGLIATALFILIPTSFLIILYVKTEAVNDM.

The chain crosses the membrane as a helical span at residues 5-25; the sequence is ILGLIATALFILIPTSFLIIL.

This sequence belongs to the PsbM family. PSII is composed of 1 copy each of membrane proteins PsbA, PsbB, PsbC, PsbD, PsbE, PsbF, PsbH, PsbI, PsbJ, PsbK, PsbL, PsbM, PsbT, PsbX, PsbY, PsbZ, Psb30/Ycf12, at least 3 peripheral proteins of the oxygen-evolving complex and a large number of cofactors. It forms dimeric complexes.

Its subcellular location is the plastid. The protein resides in the chloroplast thylakoid membrane. One of the components of the core complex of photosystem II (PSII). PSII is a light-driven water:plastoquinone oxidoreductase that uses light energy to abstract electrons from H(2)O, generating O(2) and a proton gradient subsequently used for ATP formation. It consists of a core antenna complex that captures photons, and an electron transfer chain that converts photonic excitation into a charge separation. This subunit is found at the monomer-monomer interface. The chain is Photosystem II reaction center protein M from Oltmannsiellopsis viridis (Marine flagellate).